Here is a 431-residue protein sequence, read N- to C-terminus: DNA polymerase delta subunit 2 (431 aa).

It belongs to the DNA polymerase delta/II small subunit family. Component of both the DNA polymerase delta and DNA polymerase zeta complexes. The DNA polymerase delta complex consisting of three subunits: the catalytic subunit PolD1 and two accessory subunits PolD2/Pol31 and PolD3/Pol32. Within the delta complex, interacts with both PolD1 and PolD3, and is able to interact with PolD1 in the absence of PolD3. Component of the DNA polymerase zeta complex consisting of four subunits: the catalytic subunit PolZ1 and three accessory subunits PolZ2/Rev7, PolD2/Pol31 and PolD3/Pol32. As to expression, expressed in ovaries and embryos (at the protein level).

Its subcellular location is the nucleus. It is found in the nucleoplasm. Functionally, accessory component of both the DNA polymerase delta complex and possibly the DNA polymerase zeta complex. As a component of the delta complex, participates in high fidelity genome replication, including lagging strand synthesis, DNA recombination and repair. Appears to promote the function of the DNA pol-delta complex accessory subunit PolD3 in both embryonic and postembryonic somatic cells. The polypeptide is DNA polymerase delta subunit 2 (Drosophila melanogaster (Fruit fly)).